Reading from the N-terminus, the 468-residue chain is Charged multivesicular body protein 7 (468 aa).

Coiled coils occupy residues 233–303 (EKLL…AETD) and 353–379 (VSDADIDSEDLEKELNDILQNKEMIVD). The interval 428-468 (DVPSGPVVISPQRPTEWKTDQASRSPADGSFSRSVPEPVLQ) is disordered.

It belongs to the SNF7 family.

Its subcellular location is the cytoplasm. It is found in the nucleus envelope. Functionally, ESCRT-III-like protein required to recruit the ESCRT-III complex to the nuclear envelope during late anaphase. Together with SPAST, the ESCRT-III complex promotes nuclear envelope sealing and mitotic spindle disassembly during late anaphase. Plays a role in the endosomal sorting pathway. The chain is Charged multivesicular body protein 7 (chmp7) from Xenopus tropicalis (Western clawed frog).